Here is a 306-residue protein sequence, read N- to C-terminus: Probable C-terminal domain small phosphatase (306 aa).

Residues 1–36 show a composition bias toward polar residues; that stretch reads MNSSPITQVSNPNDSLNHSSTNLIPSSHNSLNNYPQ. 2 disordered regions span residues 1 to 45 and 61 to 116; these read MNSS…NRKK and NDQN…NKDS. Residues 61 to 111 show a composition bias toward low complexity; it reads NDQNNGNNINTDNGASNNDKLQQQKQYNQQQQQQYNQHQQQQQQQQQQQQY. The FCP1 homology domain occupies 132–290; that stretch reads RHVGLKTLVL…LDLLPLLDDL (159 aa). D142 serves as the catalytic 4-aspartylphosphate intermediate. Mg(2+) contacts are provided by D142, D144, and N253. D144 functions as the Proton donor in the catalytic mechanism.

As to quaternary structure, monomer. The cofactor is Mg(2+).

The protein localises to the nucleus. The catalysed reaction is O-phospho-L-seryl-[protein] + H2O = L-seryl-[protein] + phosphate. The enzyme catalyses O-phospho-L-threonyl-[protein] + H2O = L-threonyl-[protein] + phosphate. Its function is as follows. May function as a phosphatase involved in the regulation of cell growth and differentiation. The protein is Probable C-terminal domain small phosphatase (fcpA) of Dictyostelium discoideum (Social amoeba).